A 188-amino-acid polypeptide reads, in one-letter code: GMP synthase [glutamine-hydrolyzing] subunit A (188 aa).

The region spanning 1–188 is the Glutamine amidotransferase type-1 domain; that stretch reads MIVIMDNGGQ…RNFAKLCGEL (188 aa). Cys-78 serves as the catalytic Nucleophile. Residues His-165 and Glu-167 contribute to the active site.

In terms of assembly, heterodimer composed of a glutamine amidotransferase subunit (A) and a GMP-binding subunit (B).

The catalysed reaction is XMP + L-glutamine + ATP + H2O = GMP + L-glutamate + AMP + diphosphate + 2 H(+). Its pathway is purine metabolism; GMP biosynthesis; GMP from XMP (L-Gln route): step 1/1. In terms of biological role, catalyzes the synthesis of GMP from XMP. The polypeptide is GMP synthase [glutamine-hydrolyzing] subunit A (Pyrococcus abyssi (strain GE5 / Orsay)).